A 499-amino-acid polypeptide reads, in one-letter code: Maturase K (499 aa).

This sequence belongs to the intron maturase 2 family. MatK subfamily.

Its subcellular location is the plastid. It is found in the chloroplast. Functionally, usually encoded in the trnK tRNA gene intron. Probably assists in splicing its own and other chloroplast group II introns. The chain is Maturase K from Ceratozamia mexicana (Mexican horncone).